The chain runs to 85 residues: Large ribosomal subunit protein bL27 (85 aa).

The tract at residues 1–23 (MAHKKGQGSTQNNRDSAGRRLGV) is disordered.

It belongs to the bacterial ribosomal protein bL27 family.

This Aliarcobacter butzleri (strain RM4018) (Arcobacter butzleri) protein is Large ribosomal subunit protein bL27.